The primary structure comprises 313 residues: tRNA dimethylallyltransferase (313 aa).

An ATP-binding site is contributed by 13–20; sequence GPTASGKT. 15–20 serves as a coordination point for substrate; the sequence is TASGKT. Interaction with substrate tRNA stretches follow at residues 38–41, 162–166, 243–248, and 276–283; these read DSAL, QRLSR, RCVGYR, and KRQITWLR.

This sequence belongs to the IPP transferase family. In terms of assembly, monomer. The cofactor is Mg(2+).

It catalyses the reaction adenosine(37) in tRNA + dimethylallyl diphosphate = N(6)-dimethylallyladenosine(37) in tRNA + diphosphate. In terms of biological role, catalyzes the transfer of a dimethylallyl group onto the adenine at position 37 in tRNAs that read codons beginning with uridine, leading to the formation of N6-(dimethylallyl)adenosine (i(6)A). The polypeptide is tRNA dimethylallyltransferase (Aliivibrio salmonicida (strain LFI1238) (Vibrio salmonicida (strain LFI1238))).